The sequence spans 792 residues: Kinesin-like protein KIF3C (792 aa).

The Kinesin motor domain maps to 10–363 (ALKVVARCRP…LRFANRAKNI (354 aa)). Residue 97-104 (GQTGTGKT) participates in ATP binding. Disordered stretches follow at residues 249–287 (GSER…RPKE), 397–418 (MLGK…APAG), and 749–792 (RPST…LDHE). The segment covering 257-268 (GPNTTGGTATQP) has biased composition (low complexity). Gly residues predominate over residues 269–282 (TGGGGGGGGGGGGG). Positions 374–627 (KDTLLREFQE…QNEQTRELKL (254 aa)) form a coiled coil. Basic residues predominate over residues 397-412 (MLGKRLRRKSSRRKKA). The globular stretch occupies residues 628-792 (KYLIIENFIP…LRPTTVLDHE (165 aa)). Positions 773-792 (AHASLAASAALRPTTVLDHE) are enriched in low complexity.

It belongs to the TRAFAC class myosin-kinesin ATPase superfamily. Kinesin family. Kinesin II subfamily. In terms of assembly, heterodimer of KIF3A and KIF3C.

It is found in the cytoplasm. The protein localises to the cytoskeleton. In terms of biological role, microtubule-based anterograde translocator for membranous organelles. This is Kinesin-like protein KIF3C (KIF3C) from Bos taurus (Bovine).